The following is a 373-amino-acid chain: Queuine tRNA-ribosyltransferase (373 aa).

The Proton acceptor role is filled by aspartate 91. Substrate-binding positions include 91-95 (DSGGF), aspartate 145, and glutamine 187. The segment at 245-251 (GVGTPED) is RNA binding. Catalysis depends on aspartate 264, which acts as the Nucleophile. Positions 269–273 (TRNAR) are RNA binding; important for wobble base 34 recognition. Zn(2+)-binding residues include cysteine 302, cysteine 304, cysteine 307, and histidine 333.

The protein belongs to the queuine tRNA-ribosyltransferase family. In terms of assembly, homodimer. Within each dimer, one monomer is responsible for RNA recognition and catalysis, while the other monomer binds to the replacement base PreQ1. The cofactor is Zn(2+).

The enzyme catalyses 7-aminomethyl-7-carbaguanine + guanosine(34) in tRNA = 7-aminomethyl-7-carbaguanosine(34) in tRNA + guanine. The protein operates within tRNA modification; tRNA-queuosine biosynthesis. Its function is as follows. Catalyzes the base-exchange of a guanine (G) residue with the queuine precursor 7-aminomethyl-7-deazaguanine (PreQ1) at position 34 (anticodon wobble position) in tRNAs with GU(N) anticodons (tRNA-Asp, -Asn, -His and -Tyr). Catalysis occurs through a double-displacement mechanism. The nucleophile active site attacks the C1' of nucleotide 34 to detach the guanine base from the RNA, forming a covalent enzyme-RNA intermediate. The proton acceptor active site deprotonates the incoming PreQ1, allowing a nucleophilic attack on the C1' of the ribose to form the product. After dissociation, two additional enzymatic reactions on the tRNA convert PreQ1 to queuine (Q), resulting in the hypermodified nucleoside queuosine (7-(((4,5-cis-dihydroxy-2-cyclopenten-1-yl)amino)methyl)-7-deazaguanosine). The sequence is that of Queuine tRNA-ribosyltransferase from Syntrophobacter fumaroxidans (strain DSM 10017 / MPOB).